The following is a 305-amino-acid chain: MAREDSVKCLRCLLYALNLLFWLMSISVLAVSAWMRDYLNNVLTLTAETRVEEAVILTYFPVVHPVMIAVCCFLIIVGMLGYCGTVKRNLLLLAWYFGSLLVIFCVELACGVWTYEQEIMVPVQWSDMVTLKARMTNYGLPRYRWLTHAWNFFQREFKCCGVVYFTDWLEMTEMDWPPDSCCVREFPGCSKQAHQEDLSDLYQEGCGKKMYSFLRGTKQLQVLRFLGISIGVTQILAMILTITLLWALYYDRREPGTDQMMALKNDTTQHLPCHSVELLKPSLSRIFEHTSMANSFNTHFEMEEL.

Residues 1–12 are Cytoplasmic-facing; sequence MAREDSVKCLRC. 2 S-palmitoyl cysteine lipidation sites follow: Cys-9 and Cys-12. The helical transmembrane segment at 13–33 threads the bilayer; sequence LLYALNLLFWLMSISVLAVSA. Topologically, residues 34–59 are extracellular; it reads WMRDYLNNVLTLTAETRVEEAVILTY. The helical transmembrane segment at 60–80 threads the bilayer; sequence FPVVHPVMIAVCCFLIIVGML. At 81-89 the chain is on the cytoplasmic side; that stretch reads GYCGTVKRN. Residue Cys-83 is the site of S-palmitoyl cysteine attachment. The chain crosses the membrane as a helical span at residues 90-110; sequence LLLLAWYFGSLLVIFCVELAC. Residues 111-224 lie on the Extracellular side of the membrane; it reads GVWTYEQEIM…RGTKQLQVLR (114 aa). Residues 225 to 245 form a helical membrane-spanning segment; that stretch reads FLGISIGVTQILAMILTITLL. The Cytoplasmic portion of the chain corresponds to 246–305; sequence WALYYDRREPGTDQMMALKNDTTQHLPCHSVELLKPSLSRIFEHTSMANSFNTHFEMEEL.

Belongs to the tetraspanin (TM4SF) family. As to quaternary structure, component of a complex, at least composed of TSPAN12, FZD4 and norrin (NDP). Interacts (when palmitoylated) with ADAM10. Interacts with MMP14/MT1-MMP. In terms of processing, palmitoylated; required for interaction with ADAM10. The precise position of palmitoylated residues is unclear and occurs either on Cys-9, Cys-12 and/or Cys-83.

It localises to the cell membrane. Its function is as follows. Regulator of cell surface receptor signal transduction. Plays a central role in retinal vascularization by regulating norrin (NDP) signal transduction. Acts in concert with norrin (NDP) to promote FZD4 multimerization and subsequent activation of FZD4, leading to promote accumulation of beta-catenin (CTNNB1) and stimulate LEF/TCF-mediated transcriptional programs. Suprisingly, it only activates the norrin (NDP)-dependent activation of FZD4, while it does not activate the Wnt-dependent activation of FZD4, suggesting the existence of a Wnt-independent signaling that also promote accumulation the beta-catenin (CTNNB1). Acts as a regulator of membrane proteinases such as ADAM10 and MMP14/MT1-MMP. Activates ADAM10-dependent cleavage activity of amyloid precursor protein (APP). Activates MMP14/MT1-MMP-dependent cleavage activity. This is Tetraspanin-12 (TSPAN12) from Bos taurus (Bovine).